The sequence spans 367 residues: Histidinol-phosphate aminotransferase (367 aa).

At Lys225 the chain carries N6-(pyridoxal phosphate)lysine.

The protein belongs to the class-II pyridoxal-phosphate-dependent aminotransferase family. Histidinol-phosphate aminotransferase subfamily. As to quaternary structure, homodimer. The cofactor is pyridoxal 5'-phosphate.

It carries out the reaction L-histidinol phosphate + 2-oxoglutarate = 3-(imidazol-4-yl)-2-oxopropyl phosphate + L-glutamate. Its pathway is amino-acid biosynthesis; L-histidine biosynthesis; L-histidine from 5-phospho-alpha-D-ribose 1-diphosphate: step 7/9. In Hyphomonas neptunium (strain ATCC 15444), this protein is Histidinol-phosphate aminotransferase.